The chain runs to 509 residues: Maturase K (509 aa).

This sequence belongs to the intron maturase 2 family. MatK subfamily.

It localises to the plastid. Its subcellular location is the chloroplast. In terms of biological role, usually encoded in the trnK tRNA gene intron. Probably assists in splicing its own and other chloroplast group II introns. The protein is Maturase K of Nicotiana alata (Winged tobacco).